The primary structure comprises 526 residues: Anthranilate synthase component 1 (526 aa).

L-tryptophan contacts are provided by residues serine 40 and 304–306; that span reads PYM. 341–342 is a binding site for chorismate; the sequence is GT. Residue glutamate 374 coordinates Mg(2+). Residues tyrosine 461, arginine 481, 495-497, and glycine 497 contribute to the chorismate site; that span reads GAG. Glutamate 510 serves as a coordination point for Mg(2+).

Belongs to the anthranilate synthase component I family. In terms of assembly, heterotetramer consisting of two non-identical subunits: a beta subunit (TrpG) and a large alpha subunit (TrpE). The cofactor is Mg(2+).

The enzyme catalyses chorismate + L-glutamine = anthranilate + pyruvate + L-glutamate + H(+). The protein operates within amino-acid biosynthesis; L-tryptophan biosynthesis; L-tryptophan from chorismate: step 1/5. Feedback inhibited by tryptophan. Part of a heterotetrameric complex that catalyzes the two-step biosynthesis of anthranilate, an intermediate in the biosynthesis of L-tryptophan. In the first step, the glutamine-binding beta subunit (TrpG) of anthranilate synthase (AS) provides the glutamine amidotransferase activity which generates ammonia as a substrate that, along with chorismate, is used in the second step, catalyzed by the large alpha subunit of AS (TrpE) to produce anthranilate. In the absence of TrpG, TrpE can synthesize anthranilate directly from chorismate and high concentrations of ammonia. This is Anthranilate synthase component 1 (trpE) from Buchnera aphidicola subsp. Tetraneura caerulescens.